The primary structure comprises 258 residues: U6 snRNA phosphodiesterase 1 (258 aa).

Positions 1-20 (MALVDYGGSSSSASEDEDCT) are disordered. The active-site Proton acceptor is the H117. Residues 117 to 119 (HLS), Y200, and 202 to 208 (PASFHVS) contribute to the AMP site. Residues Y200 and 204-208 (SFHVS) each bind UMP. The active-site Proton donor is the H206.

This sequence belongs to the 2H phosphoesterase superfamily. USB1 family.

The protein localises to the nucleus. It carries out the reaction a 3'-end uridylyl-uridine-RNA = a 3'-end 2',3'-cyclophospho-uridine-RNA + uridine. Its function is as follows. 3'-5' RNA exonuclease that trims the 3' end of oligo(U) tracts of the pre-U6 small nuclear RNA (snRNA) molecule, leading to the formation of a mature U6 snRNA 3' end-terminated with a 2',3'-cyclic phosphate. Participates in the U6 snRNA 3' end processing that prevents U6 snRNA degradation. In Drosophila melanogaster (Fruit fly), this protein is U6 snRNA phosphodiesterase 1.